The following is a 306-amino-acid chain: Polyphosphate kinase PPK2B (306 aa).

Belongs to the polyphosphate kinase 2 (PPK2) family. Class I subfamily. Homotetramer. It depends on Mn(2+) as a cofactor.

It carries out the reaction [phosphate](n) + ATP = [phosphate](n+1) + ADP. It catalyses the reaction [phosphate](n) + GTP = [phosphate](n+1) + GDP. Its function is as follows. Catalyzes the synthesis of polyP from ATP or GTP. Can also use inorganic polyphosphate (polyP) as a donor to convert ADP to ATP, but the activity is 10-fold higher in vitro for polyP synthesis than for ATP formation. In Corynebacterium glutamicum (strain ATCC 13032 / DSM 20300 / JCM 1318 / BCRC 11384 / CCUG 27702 / LMG 3730 / NBRC 12168 / NCIMB 10025 / NRRL B-2784 / 534), this protein is Polyphosphate kinase PPK2B.